Consider the following 397-residue polypeptide: 4-O-methyl-glucuronoyl methylesterase (397 aa).

The first 18 residues, 1–18 (MVHLTSALLVAGAAFAAA), serve as a signal peptide directing secretion. Cystine bridges form between cysteine 31/cysteine 65, cysteine 212/cysteine 347, and cysteine 244/cysteine 319. Residues 211-216 (GCSRNG) carry the GXSYXG catalytic site motif motif. Serine 213 (nucleophile) is an active-site residue. Positions 217, 259, 267, and 310 each coordinate substrate. Histidine 346 functions as the Proton donor/acceptor in the catalytic mechanism.

The protein belongs to the carbohydrate esterase 15 (CE15) family.

Its subcellular location is the secreted. The catalysed reaction is a 4-O-methyl-alpha-D-glucuronosyl ester derivative + H2O = 4-O-methyl-alpha-D-glucuronate derivative + an alcohol + H(+). In terms of biological role, glucuronoyl esterase which may play a significant role in biomass degradation, as it is considered to disconnect hemicellulose from lignin through the hydrolysis of the ester bond between 4-O-methyl-D-glucuronic acid residues of glucuronoxylans and aromatic alcohols of lignin. This Thermothelomyces thermophilus (strain ATCC 42464 / BCRC 31852 / DSM 1799) (Sporotrichum thermophile) protein is 4-O-methyl-glucuronoyl methylesterase (ge2).